A 110-amino-acid polypeptide reads, in one-letter code: Inner membrane protein H108R (110 aa).

The chain crosses the membrane as a helical span at residues 10–32 (LIVIITILITTRELSTTMLIVSL).

Belongs to the asfivirus H108R family.

The protein localises to the virion membrane. The protein is Inner membrane protein H108R of African swine fever virus (isolate Pig/Kenya/KEN-50/1950) (ASFV).